We begin with the raw amino-acid sequence, 373 residues long: Probable cysteine protease RD19C (373 aa).

An N-terminal signal peptide occupies residues 1 to 20 (MDRVVFFFLIAATLLAGSLG). The propeptide at 21–139 (STVISGEVTD…QTAPILPTSD (119 aa)) is activation peptide. 2 disulfides stabilise this stretch: C161–C211 and C195–C245. The active site involves C164. An N-linked (GlcNAc...) asparagine glycan is attached at N258. Residues C301 and C356 are joined by a disulfide bond. Catalysis depends on residues H307 and N334.

This sequence belongs to the peptidase C1 family.

The protein localises to the lytic vacuole. Functionally, probable thiol protease. In Arabidopsis thaliana (Mouse-ear cress), this protein is Probable cysteine protease RD19C.